The primary structure comprises 2003 residues: Histone acetyltransferase KAT6A (2003 aa).

One can recognise an SAMD1-like winged helix (WH) domain in the interval 1–77 (MVKLANPLYT…LNSYKDPDNP (77 aa)). The required for activation of RUNX1-1 stretch occupies residues 1–144 (MVKLANPLYT…CGGSAAPGFH (144 aa)). Positions 52–166 (ELSVKDGTIL…HGRLLKDGPL (115 aa)) are required for nuclear localization. An H15 domain is found at 95–171 (QSVDWNKLLK…KDGPLYRLNT (77 aa)). Positions 144-663 (HQQLRLAIKR…RKGYGRFLID (520 aa)) are interaction with PML. Lys172 is subject to N6-acetyllysine. PHD-type zinc fingers lie at residues 206–265 (IPIC…CKTC) and 262–313 (CKTC…CRPR). Positions 312 to 663 (PRKKGRKLLQ…RKGYGRFLID (352 aa)) are interaction with RUNX1-1. The segment at 336–377 (GRPKNRLKKQNTVSKGPFSKVRTGPGRGRKRKITVSSQSASS) is disordered. An N6-acetyllysine mark is found at Lys350 and Lys355. Thr369 carries the post-translational modification Phosphothreonine; by PKB/AKT1. Ser419 carries the phosphoserine modification. The interval 439-466 (RKKGNRKSSTSDWPTDNQDGWESKQENE) is disordered. Residues 445-458 (KSSTSDWPTDNQDG) show a composition bias toward polar residues. Position 472 is a phosphoserine (Ser472). The tract at residues 487–777 (IQEQALQKVG…VDPECLRWTP (291 aa)) is catalytic. An MYST-type HAT domain is found at 503 to 777 (PQVRCPSVIE…VDPECLRWTP (275 aa)). The segment at 506 to 809 (RCPSVIEFGK…EPQGQERELE (304 aa)) is mediates interaction with BRPF1, required for histone H3 acetyltransferase activity. The C2HC MYST-type zinc-finger motif lies at 536-561 (LYLCEFCLKYMKSRTILQQHMKKCGW). Position 603 is an N6-acetyllysine; by autocatalysis (Lys603). Acetyl-CoA contacts are provided by residues 644–648 (SCIMI) and 653–659 (QRKGYGR). Residue Glu679 is the Proton donor/acceptor of the active site. An acetyl-CoA-binding site is contributed by Ser683. The segment at 784 to 939 (VVSEDEDEEA…DGKPDIPKGR (156 aa)) is disordered. Ser786 bears the Phosphoserine mark. Positions 786 to 798 (SEDEDEEADEGEK) are enriched in acidic residues. The span at 799–841 (EEPQGQERELETRVKVGKSVSREKKDQESSSLIETDKKPEVKE) shows a compositional bias: basic and acidic residues. An N6-acetyllysine mark is found at Lys813 and Lys816. Lys836 participates in a covalent cross-link: Glycyl lysine isopeptide (Lys-Gly) (interchain with G-Cter in SUMO2). The segment covering 866-875 (RRGRCGRKNR) has biased composition (basic residues). Positions 876 to 890 (KTQERFGDKDSKMLV) are enriched in basic and acidic residues. A Phosphotyrosine modification is found at Tyr901. Residues 904–917 (CEEKSETSQERFTE) are compositionally biased toward basic and acidic residues. Phosphoserine occurs at positions 941 and 954. The disordered stretch occupies residues 983-1083 (GFSESSEEEE…EEEESELFPR (101 aa)). An N6-acetyllysine modification is found at Lys1007. Positions 1009–1030 (TLKRKKPILHRRRRVRKRKHHN) are enriched in basic residues. Residues 1031–1042 (SSVVTETISETT) show a composition bias toward low complexity. Composition is skewed to acidic residues over residues 1043–1053 (EVLDEPFEDSD) and 1065–1079 (FEMEEEEEEEEEESE). Phosphoserine occurs at positions 1090, 1091, and 1115. Disordered regions lie at residues 1096-1174 (RCQS…RKPG), 1197-1438 (IKPG…GAYQ), 1455-1533 (HTDE…PSVS), 1546-1568 (DLGSIESTTENYENPSSYDSTMG), and 1631-1707 (TCVV…CSMN). Positions 1107–1120 (EEEEEEEESDDADD) are enriched in acidic residues. Residues 1136 to 1147 (NSASLEPDTSTP) are compositionally biased toward polar residues. The segment covering 1148-1174 (MKKKKGWPKGKSRKPIHWKKRPGRKPG) has biased composition (basic residues). A compositionally biased stretch (basic and acidic residues) spans 1204–1229 (RTQENEEIVEVKEDLLEERKEEMHTE). 2 stretches are compositionally biased toward acidic residues: residues 1230-1241 (PDEEAEEEEDTT) and 1282-1299 (EEPQELEEQEQEEEDEVT). Basic and acidic residues predominate over residues 1317–1334 (HLDSLKTKEPEEQPARED). A Glycyl lysine isopeptide (Lys-Gly) (interchain with G-Cter in SUMO2) cross-link involves residue Lys1336. 2 stretches are compositionally biased toward basic and acidic residues: residues 1352 to 1361 (DSRENTKDKD) and 1393 to 1414 (DSNTKEELIELKEEEEIPHSEL). A compositionally biased stretch (low complexity) spans 1473–1490 (HNSPISSIPSHPSQSVRS). Composition is skewed to polar residues over residues 1502 to 1523 (GYTQISPEQGSLSAPSMQNMET) and 1550 to 1568 (IESTTENYENPSSYDSTMG). An interaction with RUNX1-2 region spans residues 1511 to 1636 (GSLSAPSMQN…KSPQTCVVER (126 aa)). The interval 1511–1740 (GSLSAPSMQN…YERIPGDFGA (230 aa)) is interaction with PML. Pro residues-rich tracts occupy residues 1640–1673 (NQQPPPPPPPPPPPQQPQPPPQQQAAPQPPPPQP) and 1682–1698 (QPPPPQQQPQPPPPQQQ). Residues 1912-1947 (SMNMNTLNAMNSYRMTQPMMNSSYHSNPAYMNQTAQ) are required for activation of RUNX1-2.

This sequence belongs to the MYST (SAS/MOZ) family. In terms of assembly, component of the MOZ/MORF complex composed at least of ING5, KAT6A, KAT6B, MEAF6 and one of BRPF1, BRD1/BRPF2 and BRPF3. Interacts with RUNX2. Interacts with RUNX1; phosphorylation of RUNX1 enhances the interaction. Interacts with p53/TP53. Interacts with PML and this interaction positively regulates its acetylation activity towards p53/TP53. Autoacetylated. Autoacetylation at Lys-603 is required for proper function. In terms of processing, phosphorylation at Thr-369 by PKB/AKT1 inhibits its interaction with PML and negatively regulates its acetylation activity towards p53/TP53.

It is found in the nucleus. The protein resides in the nucleolus. The protein localises to the nucleoplasm. Its subcellular location is the PML body. The catalysed reaction is L-lysyl-[protein] + acetyl-CoA = N(6)-acetyl-L-lysyl-[protein] + CoA + H(+). In terms of biological role, histone acetyltransferase that acetylates lysine residues in histone H3 and histone H4 (in vitro). Component of the MOZ/MORF complex which has a histone H3 acetyltransferase activity. May act as a transcriptional coactivator for RUNX1 and RUNX2. Acetylates p53/TP53 at 'Lys-120' and 'Lys-382' and controls its transcriptional activity via association with PML. This chain is Histone acetyltransferase KAT6A (Kat6a), found in Mus musculus (Mouse).